The chain runs to 169 residues: Crossover junction endodeoxyribonuclease RuvC (169 aa).

Active-site residues include D11, E71, and D143. Residues D11, E71, and D143 each coordinate Mg(2+).

It belongs to the RuvC family. As to quaternary structure, homodimer which binds Holliday junction (HJ) DNA. The HJ becomes 2-fold symmetrical on binding to RuvC with unstacked arms; it has a different conformation from HJ DNA in complex with RuvA. In the full resolvosome a probable DNA-RuvA(4)-RuvB(12)-RuvC(2) complex forms which resolves the HJ. The cofactor is Mg(2+).

Its subcellular location is the cytoplasm. The enzyme catalyses Endonucleolytic cleavage at a junction such as a reciprocal single-stranded crossover between two homologous DNA duplexes (Holliday junction).. The RuvA-RuvB-RuvC complex processes Holliday junction (HJ) DNA during genetic recombination and DNA repair. Endonuclease that resolves HJ intermediates. Cleaves cruciform DNA by making single-stranded nicks across the HJ at symmetrical positions within the homologous arms, yielding a 5'-phosphate and a 3'-hydroxyl group; requires a central core of homology in the junction. The consensus cleavage sequence is 5'-(A/T)TT(C/G)-3'. Cleavage occurs on the 3'-side of the TT dinucleotide at the point of strand exchange. HJ branch migration catalyzed by RuvA-RuvB allows RuvC to scan DNA until it finds its consensus sequence, where it cleaves and resolves the cruciform DNA. The polypeptide is Crossover junction endodeoxyribonuclease RuvC (Rhizobium leguminosarum bv. trifolii (strain WSM2304)).